Consider the following 311-residue polypeptide: Serine hydrolase-like protein (311 aa).

In terms of domain architecture, AB hydrolase-1 spans 27–227 (PPVLCLHGWL…FVSKEMFVHS (201 aa)). The active site involves Ser-102. Residue Ser-210 is modified to Phosphoserine.

Belongs to the AB hydrolase superfamily. As to expression, ubiquitous. High protein expression in skeletal and cardiac muscle.

It is found in the cytoplasm. The protein resides in the perinuclear region. Its subcellular location is the peroxisome. Functionally, probable serine hydrolase. May be related to cell muscle hypertrophy. The sequence is that of Serine hydrolase-like protein (Serhl) from Mus musculus (Mouse).